The following is an 84-amino-acid chain: Small ribosomal subunit protein bS18 (84 aa).

It belongs to the bacterial ribosomal protein bS18 family. In terms of assembly, part of the 30S ribosomal subunit. Forms a tight heterodimer with protein bS6.

Its function is as follows. Binds as a heterodimer with protein bS6 to the central domain of the 16S rRNA, where it helps stabilize the platform of the 30S subunit. The sequence is that of Small ribosomal subunit protein bS18 from Dictyoglomus turgidum (strain DSM 6724 / Z-1310).